The chain runs to 89 residues: FMRFamide-like neuropeptides 19 (89 aa).

The first 20 residues, 1–20 (MSFQLTLFSMLFLLIAVVVG), serve as a signal peptide directing secretion. Residues 21–67 (QPIQSQNGDLKMQAVQDNSPLNMEAFNDDSALYDYLEQSDPSLKSME) constitute a propeptide that is removed on maturation. Residue F76 is modified to Phenylalanine amide. A propeptide spanning residues 80-89 (ASWASSVRFG) is cleaved from the precursor.

Belongs to the FARP (FMRFamide related peptide) family. Each flp gene is expressed in a distinct set of neurons. Flp-19 is expressed in the URX interneurons, the serotonin and acetylcholine-expressing HSN neurons, and the AIN, AWA and BAG neurons.

The protein localises to the secreted. In terms of biological role, FMRFamides and FMRFamide-like peptides are neuropeptides. WANQVRF-amide inhibits the activity of dissected pharyngeal myogenic muscle system. This Caenorhabditis elegans protein is FMRFamide-like neuropeptides 19.